The sequence spans 1303 residues: Latent-transforming growth factor beta-binding protein 3 (1303 aa).

A signal peptide spans 1-43; the sequence is MPGPRGAAGGLAPEMRGAGAAGLLALLLLLLLLLLGLGGRVEG. An N-linked (GlcNAc...) asparagine glycan is attached at N89. The EGF-like 1 domain maps to 109 to 141; sequence RVVVCPLPCMNGGQCSSRNQCLCPPDFTGRFCQ. Disulfide bonds link C113–C123, C117–C129, C131–C140, C279–C303, C289–C316, and C304–C319. The tract at residues 247–282 is disordered; sequence SSNAESAAPSQHLLPHPKPSHPRPPTQKPLGRCFQD. The TB 1 domain maps to 277–331; it reads GRCFQDTLPKQPCGSNPLPGLTKQEDCCGSIGTAWGQSKCHKCPQLQYTGVQKPG. N349 is a glycosylation site (N-linked (GlcNAc...) asparagine). The region spanning 355-395 is the EGF-like 2; calcium-binding domain; it reads DINECAMPGVCRHGDCLNNPGSYRCVCPPGHSLGPSRTQCI. 7 disulfides stabilise this stretch: C359–C370, C365–C379, C381–C394, C405–C428, C415–C440, C429–C443, and C430–C455. One can recognise a TB 2 domain in the interval 403-455; it reads SLCFRLVSPEHQCQHPLTTRLTRQLCCCSVGKAWGARCQRCPTDGTAAFKEIC. A disordered region spans residues 478-552; sequence FSLFLHPDGP…ISRPSPPTMR (75 aa). Positions 529 to 540 are enriched in low complexity; the sequence is PTATTTPARPYP. In terms of domain architecture, EGF-like 3 spans 574-615; sequence ETDECRLNQNICGHGECVPGPPDYSCHCNPGYRSHPQHRYCV. Disulfide bonds link C578/C590, C585/C599, C601/C614, C620/C632, C625/C641, C664/C676, C670/C685, C687/C701, C748/C759, C754/C768, C770/C783, C789/C800, C795/C809, C811/C824, C830/C841, C836/C850, C852/C864, C870/C883, C877/C892, C894/C907, C919/C942, C929/C954, C943/C959, C944/C971, C997/C1010, C1005/C1019, C1021/C1034, C1040/C1051, C1046/C1060, C1062/C1075, C1086/C1097, C1092/C1106, C1108/C1121, C1138/C1162, C1148/C1174, C1163/C1177, and C1164/C1186. The EGF-like 4; calcium-binding domain occupies 616-659; that stretch reads DVNECEAEPCGPGRGICMNTGGSYNCHCNRGYRLHVGAGGRSCV. The EGF-like 5; calcium-binding domain maps to 660 to 702; the sequence is DLNECAKPHLCGDGGFCINFPGHYKCNCYPGYRLKASRPPVCE. In terms of domain architecture, EGF-like 6; calcium-binding spans 744 to 784; that stretch reads DVNECAEGSPCSPGWCENLPGSFRCTCAQGYAPAPDGRSCL. One can recognise an EGF-like 7; calcium-binding domain in the interval 785 to 825; sequence DVDECEAGDVCDNGICSNTPGSFQCQCLSGYHLSRDRSHCE. The region spanning 826–865 is the EGF-like 8; calcium-binding domain; that stretch reads DIDECDFPAACIGGDCINTNGSYRCLCPQGHRLVGGRKCQ. N845 carries an N-linked (GlcNAc...) asparagine glycan. The EGF-like 9; calcium-binding domain occupies 866 to 908; it reads DIDECSQDPSLCLPHGACKNLQGSYVCVCDEGFTPTQDQHGCE. The region spanning 917-971 is the TB 3 domain; the sequence is KECYLNFDDTVFCDSVLATNVTQQECCCSLGAGWGDHCEIYPCPVYSSAEFHSLC. A glycan (N-linked (GlcNAc...) asparagine) is linked at N936. The region spanning 993–1035 is the EGF-like 10; calcium-binding domain; sequence DIDECMLFGSEICKEGKCVNTQPGYECYCKQGFYYDGNLLECV. Positions 1036 to 1076 constitute an EGF-like 11; calcium-binding domain; that stretch reads DVDECLDESNCRNGVCENTRGGYRCACTPPAEYSPAQRQCL. Residues 1082–1122 form the EGF-like 12; calcium-binding domain; the sequence is DVDECQDPAACRPGRCVNLPGSYRCECRPPWVPGPSGRDCQ. Residues 1136–1186 enclose the TB 4 domain; the sequence is DVCWSQRGEDGMCAGPLAGPALTFDDCCCRQGRGWGAQCRPCPPRGAGSHC. Residues 1188–1198 are compositionally biased toward polar residues; sequence TSQSESNSFWD. A disordered region spans residues 1188-1219; that stretch reads TSQSESNSFWDTSPLLLGKPPRDEDSSEEDSD. The 45-residue stretch at 1254–1298 folds into the EGF-like 13; calcium-binding domain; it reads DIDECRELNQRGLLCKSERCVNTSGSFRCVCKAGFARSRPHGACV. 2 disulfide bridges follow: C1258–C1273 and C1268–C1282. Residue N1275 is glycosylated (N-linked (GlcNAc...) asparagine).

It belongs to the LTBP family. Forms part of the large latent transforming growth factor beta precursor complex; removal is essential for activation of complex. Interacts with EFEMP2. In terms of processing, contains hydroxylated asparagine residues. Post-translationally, two intrachain disulfide bonds from the TB3 domain are rearranged upon TGFB1 binding, and form interchain bonds with TGFB1 propeptide, anchoring it to the extracellular matrix. Isoform 2: Expressed prominently in heart, skeletal muscle, prostate, testis, small intestine and ovary. Isoform 1: Strongly expressed in pancreas and liver.

The protein localises to the secreted. Its subcellular location is the extracellular space. It localises to the extracellular matrix. Functionally, key regulator of transforming growth factor beta (TGFB1, TGFB2 and TGFB3) that controls TGF-beta activation by maintaining it in a latent state during storage in extracellular space. Associates specifically via disulfide bonds with the Latency-associated peptide (LAP), which is the regulatory chain of TGF-beta, and regulates integrin-dependent activation of TGF-beta. The chain is Latent-transforming growth factor beta-binding protein 3 (LTBP3) from Homo sapiens (Human).